A 314-amino-acid polypeptide reads, in one-letter code: Citrate/oxoglutarate carrier protein (314 aa).

3 Solcar repeats span residues 18–100 (VSFS…EAEY), 107–199 (LNNF…VEDG), and 217–301 (EKIG…AKEF). 5 helical membrane-spanning segments follow: residues 23-44 (ILLG…LEVV), 77-97 (IPWA…VSAE), 111-127 (ASGI…QAYL), 178-198 (VAIR…LVED), and 218-238 (KIGA…IEVI). Residues 246-259 (KEDPNRPKNLTVGK) mediate DNA binding. A helical transmembrane segment spans residues 273 to 294 (LYRGVTPRIGLGIWQTVFMVGF).

The protein belongs to the mitochondrial carrier (TC 2.A.29) family.

It localises to the mitochondrion inner membrane. The protein resides in the mitochondrion matrix. The protein localises to the mitochondrion nucleoid. Its activity is regulated as follows. Strongly inhibited by mersalyl, p-chloromercuribenzenesulfonate, mercuric chloride, N-ethylmaleimide, pyridoxal 5'-phosphate, bathophenanthroline, and tannic acid. Partially inhibited by alpha-cyanocinnamate and bromescol purple. Weakly inhibited by butylmalonate and phenylsuccinate. Not inhibited by 1,2,3-benzenetricarboxylate or carboxyatractyloside. Functionally, mitochondrial antiporter which catalyzes the transport of citrate and oxoglutarate across the membrane. Also shows specificity for oxaloacetate, and to a lesser extent succinate and fumarate. Transports isocitrate, cis-aconitate and L-malate with very low efficiency. Does not show uniporter activity. Helps to maintain normal citrate levels and NADPH/NADP(+) ratios under conditions of oxidative stress. In addition, associates with the mitochondrial nucleoid and binds DNA in vitro, although the relevance of these data in vivo is unclear. This is Citrate/oxoglutarate carrier protein (YHM2) from Saccharomyces cerevisiae (strain ATCC 204508 / S288c) (Baker's yeast).